The following is a 366-amino-acid chain: MRVMAPRTLILLLSGALALTETWAGSHSMRYFYTSVSRPGRGEPRFISVGYVDDTQFVRFDSDAASPRGEPRAPWVEQEGPEYWDRETQKYKRQAQTDRVNLRKLRGYYNQSEDGSHTLQSMYGCDLGPDGRLLRGYSQFAYDGKDYIALNEDLRSWTAADTAAQVTQRKWEAARVAEQERAYLEGLCVEWLRRYLENGKETLQRAEPPKTHVTHHPLSDHEATLRCWALGFYPAEITLTWQRDGEDQTQDTELVETRPAGDGTFQKWAAVVVPSGQEQRYTCHMQHEGLPEPLTLRWEPSSQPTIPIVGIVVGLAVLVVLAVLGAVVTAMMCRRKSSGGKGGSCSQAACSNSAQGSDESLITCKA.

The first 24 residues, 1-24, serve as a signal peptide directing secretion; sequence MRVMAPRTLILLLSGALALTETWA. Residues 25–114 are alpha-1; sequence GSHSMRYFYT…LRGYYNQSED (90 aa). Residues 25–308 are Extracellular-facing; that stretch reads GSHSMRYFYT…EPSSQPTIPI (284 aa). N-linked (GlcNAc...) asparagine glycosylation is present at asparagine 110. Residues 115-206 are alpha-2; that stretch reads GSHTLQSMYG…ENGKETLQRA (92 aa). 2 cysteine pairs are disulfide-bonded: cysteine 125–cysteine 188 and cysteine 227–cysteine 283. The interval 207–298 is alpha-3; that stretch reads EPPKTHVTHH…GLPEPLTLRW (92 aa). An Ig-like C1-type domain is found at 209–297; the sequence is PKTHVTHHPL…EGLPEPLTLR (89 aa). A connecting peptide region spans residues 299 to 308; it reads EPSSQPTIPI. Residues 309–332 traverse the membrane as a helical segment; it reads VGIVVGLAVLVVLAVLGAVVTAMM. The Cytoplasmic portion of the chain corresponds to 333–366; the sequence is CRRKSSGGKGGSCSQAACSNSAQGSDESLITCKA.

The protein belongs to the MHC class I family. As to quaternary structure, heterodimer of an alpha chain and a beta chain (beta-2-microglobulin).

It is found in the membrane. Involved in the presentation of foreign antigens to the immune system. This Gorilla gorilla gorilla (Western lowland gorilla) protein is Class I histocompatibility antigen, Gogo-C*0203 alpha chain.